Reading from the N-terminus, the 695-residue chain is Probable serine/threonine-protein kinase abkD (695 aa).

Over residues 105 to 119 (TTKPQPCQAKPPSSK) the composition is skewed to polar residues. Positions 105-149 (TTKPQPCQAKPPSSKQQQQQQQQQQQQQQQQQQQQSKKKTSKDRL) are disordered. Residues 118-150 (SKQQQQQQQQQQQQQQQQQQQQSKKKTSKDRLR) are a coiled coil. Residues 120 to 139 (QQQQQQQQQQQQQQQQQQQQ) are compositionally biased toward low complexity. Residues 177–193 (TIASILAAIALIIYSYE) form a helical membrane-spanning segment. The region spanning 317–695 (DFDRLPIAAA…LIKDQMKKLG (379 aa)) is the Protein kinase domain. ATP contacts are provided by residues 323-331 (IAAASLAQV) and Lys-345. The Proton acceptor role is filled by Asp-477.

It belongs to the protein kinase superfamily. ADCK protein kinase family.

Its subcellular location is the membrane. The sequence is that of Probable serine/threonine-protein kinase abkD (abkD) from Dictyostelium discoideum (Social amoeba).